The sequence spans 397 residues: Putative nickel insertion protein (397 aa).

Belongs to the LarC family.

The polypeptide is Putative nickel insertion protein (Synechococcus sp. (strain JA-2-3B'a(2-13)) (Cyanobacteria bacterium Yellowstone B-Prime)).